A 284-amino-acid polypeptide reads, in one-letter code: Heat stress transcription factor B-1 (284 aa).

Residues 12–106 (PAPFLSKTYQ…LLTDIRRRKS (95 aa)) mediate DNA binding. The interval 118-151 (VGSPSESNSGGGDDHGSSSTSSPGSSKNPGSVEN) is disordered. Residues 134-148 (SSSTSSPGSSKNPGS) show a composition bias toward low complexity. The interval 147–192 (GSVENMVADLSGENEKLKRENNNLSSELAAAKKQRDELVTFLTGHL) is hydrophobic repeat HR-A/B. The short motif at 247–252 (RKKRDR) is the Nuclear localization signal element.

It belongs to the HSF family. Class B subfamily. As to quaternary structure, homotrimer. In terms of processing, exhibits temperature-dependent phosphorylation.

Its subcellular location is the nucleus. Its function is as follows. Transcriptional regulator that specifically binds DNA sequence 5'-AGAAnnTTCT-3' known as heat shock promoter elements (HSE). The sequence is that of Heat stress transcription factor B-1 (HSFB1) from Arabidopsis thaliana (Mouse-ear cress).